The primary structure comprises 75 residues: Lividin-3 (75 aa).

Residues 1 to 22 (MFTLKKSLLLLFFLGTISLSLC) form the signal peptide. The propeptide occupies 23–40 (EEERDADEDEGEMTEEEV). Cys-69 and Cys-75 are disulfide-bonded.

Expressed by the skin glands.

The protein localises to the secreted. Functionally, antimicrobial peptide. The chain is Lividin-3 from Odorrana livida (Green mountain frog).